The following is a 201-amino-acid chain: Ribonuclease HII (201 aa).

Positions 10–200 (LIEAGCDEAG…LGDGQLELFS (191 aa)) constitute an RNase H type-2 domain. The a divalent metal cation site is built by aspartate 16, glutamate 17, and aspartate 108.

Belongs to the RNase HII family. Mn(2+) is required as a cofactor. The cofactor is Mg(2+).

It localises to the cytoplasm. It catalyses the reaction Endonucleolytic cleavage to 5'-phosphomonoester.. Its function is as follows. Endonuclease that specifically degrades the RNA of RNA-DNA hybrids. This is Ribonuclease HII from Bacteroides fragilis (strain YCH46).